The primary structure comprises 318 residues: Protoheme IX farnesyltransferase (318 aa).

9 helical membrane-spanning segments follow: residues 34–54 (VMSLVVFTAFAGLVLAPGQIN), 55–75 (PVIGFIAILCIAIGAGASGAL), 95–115 (IPAGKILPQEALAFGLTLSAF), 118–138 (IILGLAVNWLAAGLLAFTIFF), 155–175 (IVIGGAAGAFPPMIGWACVTG), 182–202 (IVLFLIIFLWTPAHFWALALF), 228–250 (IVVYALLTALSGICPTLLGFASL), 254–273 (AFATALGLGFIWYSLAVLRM), and 287–307 (FAFSIAYLFAIFSALLVDYMI).

It belongs to the UbiA prenyltransferase family. Protoheme IX farnesyltransferase subfamily.

It is found in the cell inner membrane. The enzyme catalyses heme b + (2E,6E)-farnesyl diphosphate + H2O = Fe(II)-heme o + diphosphate. It participates in porphyrin-containing compound metabolism; heme O biosynthesis; heme O from protoheme: step 1/1. Its function is as follows. Converts heme B (protoheme IX) to heme O by substitution of the vinyl group on carbon 2 of heme B porphyrin ring with a hydroxyethyl farnesyl side group. The sequence is that of Protoheme IX farnesyltransferase from Sinorhizobium fredii (strain NBRC 101917 / NGR234).